Reading from the N-terminus, the 1246-residue chain is Respiratory nitrate reductase 2 alpha chain (1246 aa).

A 4Fe-4S Mo/W bis-MGD-type domain is found at 43 to 107; that stretch reads DKIVRSTHGV…SYSWYLYSAN (65 aa). Positions 50, 54, 58, and 93 each coordinate [4Fe-4S] cluster. Asp-223 is a Mo-bis(molybdopterin guanine dinucleotide) binding site.

Belongs to the prokaryotic molybdopterin-containing oxidoreductase family. Tetramer composed of an alpha, a beta and 2 gamma chains. Alpha and beta are catalytic chains; gamma chain is involved in binding the enzyme complex to the cytoplasmic membrane. The cofactor is [4Fe-4S] cluster. It depends on Mo-bis(molybdopterin guanine dinucleotide) as a cofactor.

Its subcellular location is the cell membrane. The catalysed reaction is nitrate + a quinol = a quinone + nitrite + H2O. In terms of biological role, this is a second nitrate reductase enzyme which can substitute for the NRA enzyme and allows E.coli to use nitrate as an electron acceptor during anaerobic growth. Functionally, the alpha chain is the actual site of nitrate reduction. This Escherichia coli (strain K12) protein is Respiratory nitrate reductase 2 alpha chain (narZ).